The primary structure comprises 415 residues: Protein ROH1A (415 aa).

A disordered region spans residues 184-219 (VSGGGGGGGGGNKTTERSWSFGRRSGGSSAASKGGA). The segment covering 185-195 (SGGGGGGGGGN) has biased composition (gly residues). The span at 200 to 219 (RSWSFGRRSGGSSAASKGGA) shows a compositional bias: low complexity. The chain crosses the membrane as a helical span at residues 263 to 283 (MFIMSTVMVFVMWVLTAAVPC).

It belongs to the ROH1 family. Interacts with EXO70A1 and EXO70C1. Binds to EXO70C2. Mainly expressed in cells expanding in a polar manner such as pollen and root hairs.

It localises to the membrane. The protein localises to the cytoplasm. Its subcellular location is the cytosol. Its function is as follows. Required for seed coat mucilage deposition. The polypeptide is Protein ROH1A (Arabidopsis thaliana (Mouse-ear cress)).